Here is a 330-residue protein sequence, read N- to C-terminus: Ketol-acid reductoisomerase (NADP(+)) (330 aa).

Residues 1–181 form the KARI N-terminal Rossmann domain; that stretch reads MKVFYDSDFK…GLSRAGVIQT (181 aa). Residues 24–27, arginine 47, serine 52, and 82–85 each bind NADP(+); these read YGSQ and DELQ. Histidine 107 is an active-site residue. Glycine 133 is a binding site for NADP(+). Residues 182-327 enclose the KARI C-terminal knotted domain; that stretch reads TFKEETETDL…AKLRKMCGLE (146 aa). Aspartate 190, glutamate 194, glutamate 226, and glutamate 230 together coordinate Mg(2+). Residue serine 251 coordinates substrate.

The protein belongs to the ketol-acid reductoisomerase family. The cofactor is Mg(2+).

The catalysed reaction is (2R)-2,3-dihydroxy-3-methylbutanoate + NADP(+) = (2S)-2-acetolactate + NADPH + H(+). The enzyme catalyses (2R,3R)-2,3-dihydroxy-3-methylpentanoate + NADP(+) = (S)-2-ethyl-2-hydroxy-3-oxobutanoate + NADPH + H(+). It participates in amino-acid biosynthesis; L-isoleucine biosynthesis; L-isoleucine from 2-oxobutanoate: step 2/4. The protein operates within amino-acid biosynthesis; L-valine biosynthesis; L-valine from pyruvate: step 2/4. Functionally, involved in the biosynthesis of branched-chain amino acids (BCAA). Catalyzes an alkyl-migration followed by a ketol-acid reduction of (S)-2-acetolactate (S2AL) to yield (R)-2,3-dihydroxy-isovalerate. In the isomerase reaction, S2AL is rearranged via a Mg-dependent methyl migration to produce 3-hydroxy-3-methyl-2-ketobutyrate (HMKB). In the reductase reaction, this 2-ketoacid undergoes a metal-dependent reduction by NADPH to yield (R)-2,3-dihydroxy-isovalerate. This chain is Ketol-acid reductoisomerase (NADP(+)), found in Methanococcus maripaludis (strain C6 / ATCC BAA-1332).